Reading from the N-terminus, the 711-residue chain is GDNF-inducible zinc finger protein 1 (711 aa).

One can recognise a BTB domain in the interval 31–103; sequence CDVTVSVEYQ…VYTAKVQVEE (73 aa). Residues 153 to 168 are compositionally biased toward low complexity; that stretch reads SGSQVSAAPAPRASVA. 2 disordered regions span residues 153-220 and 243-312; these read SGSQ…PKIR and RLRE…EGEK. 3 stretches are compositionally biased toward basic and acidic residues: residues 197 to 212, 243 to 252, and 265 to 277; these read PPKKSKDKLDKKKEVV, RLREQQKTAE, and SPDRVGTEMEQVS. The segment covering 298 to 309 has biased composition (acidic residues); the sequence is EEEEEEEEEDEE. C2H2-type zinc fingers lie at residues 317–340, 348–371, 377–400, 407–429, 435–457, 463–485, 491–513, 519–541, 547–569, and 575–597; these read FKCSICEKAFLYEKSFLKHSKHRH, YRCDTCGQTFANRCNLKSHQRHVH, FPCELCGKKFKRKKDVKRHVLQVH, HRCGQCGKGLSSKTALRLHERTH, YGCTECGARFSQPSALKTHMRIH, FVCDECGARFTQNHMLIYHKRCH, FMCETCGKSFASKEYLKHHNRIH, FKCEVCFRTFAQRNSLYQHIKVH, YCCDQCGKQFTQLNALQRHRRIH, and FMCNACGRTFTDKSTLRRHTSIH. At Ser-613 the chain carries Phosphoserine.

The protein belongs to the krueppel C2H2-type zinc-finger protein family. In terms of assembly, interacts with NCL. In terms of tissue distribution, expressed in adult brain, heart, skeletal muscle, kidney and liver. Also detected in fetal brain and kidney, and at lower levels in fetal lung and liver.

The protein localises to the cytoplasm. Its subcellular location is the nucleus. It is found in the nucleoplasm. The protein resides in the nucleolus. Transcriptional repressor that binds the GZF1 responsive element (GRE) (consensus: 5'-TGCGCN[TG][CA]TATA-3'). May be regulating VSX2/HOX10 expression. The protein is GDNF-inducible zinc finger protein 1 of Homo sapiens (Human).